The sequence spans 683 residues: MASQLFRPLTPRLSSLTPVKPHFGHLQAGISVAIQRTDGRIHLAVVTEVRRDNAWVTVEWAEKGVKKGKKVALETIFLLNPALALAGPAAQGRASRSVSLAPPSVIGDQRTAARWAGKIPQRNETPSGDSLAVRVPSSPCLMTQRKSACLREIEKLQKQRERRRRLHREIRAQRARDADTGNAHYEIRRLIEECRRRLRGGRISGPEPRDGRRICVCVRKRPLNRQEATREDLDIVTIPSDNVVMVHESKQKVDLTRYLENQTFCFDHAFDDTASNELVYQFTDQPLVESIFRHGMATCFAYGQTGSGKTHTMGGGFSGRDQDCSKGIYAMVAQDVFLLLKTSAYEKLNLKVYGTFFEIYGGKVYDLLNWKKKLQVLEDGSQQIQVVGLQEQEVCCVEDMLNLVELGNSCRTSGQTSVNAHSSRSHAVFQIILKSRGKLHGKFSLVDLAGNERGADTAKANRKRQLEGAEINKSLLALKECIRALGQNKSHTPFRASKLTQVLRDSFIGQNSSTCMIATISPGMASCENTLNTLRYANRVKEITLNLRPRHRCLYPAEREMPRVLENHIRNSEMSLQGDEFIRIPCLQSEEEKETEGIKVLSSPLVDTTISWKEASQWPDNKIQDTSDEVNCNVDFCIAQLLSILEKKIDILTEIRRKLKLLQADIQKENRHGEVNGERSDLK.

Position 125 is a phosphothreonine; by PLK1 (threonine 125). Residues 141–176 (LMTQRKSACLREIEKLQKQRERRRRLHREIRAQRAR) adopt a coiled-coil conformation. Serine 204 is modified (phosphoserine; by PLK1). One can recognise a Kinesin motor domain in the interval 213-543 (RICVCVRKRP…LRYANRVKEI (331 aa)). ATP is bound at residue 303 to 310 (GQTGSGKT). A coiled-coil region spans residues 640–672 (QLLSILEKKIDILTEIRRKLKLLQADIQKENRH).

It belongs to the TRAFAC class myosin-kinesin ATPase superfamily. Kinesin family. MCAK/KIF2 subfamily. In terms of processing, phosphorylation at Thr-125 by PLK1 is required for activity in the correction of kinetochore-microtubules attachment errors, while phosphorylation at Ser-204 also by PLK1 is required for the kinetochore localization and activity in prometaphase.

It localises to the cytoplasm. It is found in the cytoskeleton. Its subcellular location is the microtubule organizing center. The protein localises to the centrosome. The protein resides in the spindle. It localises to the chromosome. It is found in the centromere. Its subcellular location is the kinetochore. Its function is as follows. Plus end-directed microtubule-dependent motor required for spindle assembly and chromosome movement during mitosis. Has microtubule depolymerization activity. Plays a role in chromosome congression. This chain is Kinesin-like protein KIF2B, found in Bos taurus (Bovine).